Reading from the N-terminus, the 184-residue chain is Large ribosomal subunit protein uL6 (184 aa).

Belongs to the universal ribosomal protein uL6 family. As to quaternary structure, part of the 50S ribosomal subunit.

Functionally, this protein binds to the 23S rRNA, and is important in its secondary structure. It is located near the subunit interface in the base of the L7/L12 stalk, and near the tRNA binding site of the peptidyltransferase center. The sequence is that of Large ribosomal subunit protein uL6 from Fervidobacterium nodosum (strain ATCC 35602 / DSM 5306 / Rt17-B1).